Here is a 429-residue protein sequence, read N- to C-terminus: D-amino acid dehydrogenase 1 (429 aa).

3–17 (VLVLGSGVIGVTSAY) serves as a coordination point for FAD.

The protein belongs to the DadA oxidoreductase family. FAD is required as a cofactor.

The enzyme catalyses a D-alpha-amino acid + A + H2O = a 2-oxocarboxylate + AH2 + NH4(+). Its function is as follows. Oxidative deamination of D-amino acids. The chain is D-amino acid dehydrogenase 1 (dadA1) from Ralstonia nicotianae (strain ATCC BAA-1114 / GMI1000) (Ralstonia solanacearum).